Reading from the N-terminus, the 1872-residue chain is Plexin-A3 (1872 aa).

An N-terminal signal peptide occupies residues 1–19; that stretch reads MHTVCLLPLLFFTIGGCLG. The Sema domain maps to 20 to 489; that stretch reads SSRPFRTFVV…SEKQVSQLPV (470 aa). Residues 20 to 1220 are Extracellular-facing; that stretch reads SSRPFRTFVV…ITADRALTLP (1201 aa). Asparagine 60 carries an N-linked (GlcNAc...) asparagine glycan. Intrachain disulfides connect cysteine 78–cysteine 87, cysteine 113–cysteine 121, cysteine 267–cysteine 388, cysteine 283–cysteine 339, cysteine 357–cysteine 376, cysteine 492–cysteine 509, cysteine 498–cysteine 540, cysteine 501–cysteine 518, and cysteine 512–cysteine 524. A glycan (N-linked (GlcNAc...) asparagine) is linked at asparagine 549. A disulfide bond links cysteine 575 and cysteine 595. 4 IPT/TIG domains span residues 841-934, 936-1021, 1024-1123, and 1126-1212; these read PRIT…YSFV, PTLD…YTYT, PTVT…FTYY, and PSFE…LHIT. An N-linked (GlcNAc...) asparagine glycan is attached at asparagine 1163. Residues 1221–1241 traverse the membrane as a helical segment; sequence AMVGLAAGGGLLLLAITVVLV. A coiled-coil region spans residues 1240-1294; it reads LVAYKRKTQDADRTLKRLQLQMDNLESRVALECKEAFAELQTDINELTNHMDGVQ. The Cytoplasmic portion of the chain corresponds to 1242–1872; sequence AYKRKTQDAD…QIITLVSSSS (631 aa). Serine 1597 bears the Phosphoserine mark.

The protein belongs to the plexin family.

The protein resides in the cell membrane. Its function is as follows. Coreceptor for SEMA3A and SEMA3F. Necessary for signaling by class 3 semaphorins and subsequent remodeling of the cytoskeleton. Plays a role in axon guidance in the developing nervous system. Regulates the migration of sympathetic neurons, but not of neural crest precursors. Required for normal dendrite spine morphology in pyramidal neurons. May play a role in regulating semaphorin-mediated programmed cell death in the developing nervous system. Class 3 semaphorins bind to a complex composed of a neuropilin and a plexin. The plexin modulates the affinity of the complex for specific semaphorins, and its cytoplasmic domain is required for the activation of down-stream signaling events in the cytoplasm. The sequence is that of Plexin-A3 (Plxna3) from Rattus norvegicus (Rat).